The primary structure comprises 452 residues: Protein FAM222A (452 aa).

It belongs to the FAM222 family.

This is Protein FAM222A (FAM222A) from Homo sapiens (Human).